Here is a 566-residue protein sequence, read N- to C-terminus: FAD-dependent monooxygenase asqG (566 aa).

The N-terminal stretch at 1–19 is a signal peptide; the sequence is MAAFTVIIIGGSISGLTLA. Glutamate 33, valine 47, arginine 113, aspartate 313, and alanine 326 together coordinate FAD. The next 2 membrane-spanning stretches (helical) occupy residues 448–468 and 482–502; these read ASST…GAVW and GYTL…ASAV.

This sequence belongs to the paxM FAD-dependent monooxygenase family. FAD serves as cofactor.

The protein resides in the membrane. The catalysed reaction is [(1'E)-3'-hydroxy-3',7'-dimethylocta-1',6'-dien-1'-yl]-quinolinone B + NADPH + O2 + H(+) = [(1'E)-5'-(3',3'-dimethyloxiran-2'-yl)-3'-hydroxy-3'-methylpent-1'-en-1'-yl]-quinolinone B + NADP(+) + H2O. It participates in secondary metabolite biosynthesis. Its pathway is alkaloid biosynthesis. It functions in the pathway mycotoxin biosynthesis. In terms of biological role, FAD-dependent monooxygenase; part of the gene cluster that mediates the biosynthesis of the aspoquinolone mycotoxins. Within the pathway, the FAD-dependent monooxygenase asqG catalyzes the epoxidation of the terminal C7'-C8' olefin to produce the intermediate [(1'E)-5'-(3',3'-dimethyloxiran-2'-yl)-3'-hydroxy-3'-methylpent-1'-en-1'-yl]-quinolinone B. The first step of the pathway is catalyzed by the nonribosomal peptide synthetase asqK that condenses anthranilic acid and O-methyl-L-tyrosine to produce 4'-methoxycyclopeptin. 4'-methoxycyclopeptin is then converted to 4'-methoxydehydrocyclopeptin by the ketoglutarate-dependent dioxygenase asqJ. AsqJ also converts its first product 4'-methoxydehydrocyclopeptin to 4'-methoxycyclopenin. The following conversion of 4'-methoxycyclopenin into 4'-methoxyviridicatin is catalyzed by the cyclopenase asqI. 4'-methoxyviridicatin is the precursor of quinolone natural products, and is further converted to quinolinone B. The prenyltransferase asqH1 then catalyzes the canonical Friedel-Crafts alkylation of quinolinone B with dimethylallyl cation to yield dimethylallyl quinolone, which is subjected to FAD-dependent dehydrogenation by the FAD-linked oxidoreductase asqF to yield conjugated aryl diene. The delta(3') double bond then serves as the site of the second alkylation with DMAPP catalyzed by the prenyltransferase asqH2 to yield a carbenium ion intermediate, which can be attacked by H(2)O to yield a styrenyl quinolone containing a C3'-hydroxyprenyl chain. The FAD-dependent monooxygenase asqG performs epoxidation of the terminal C7'-C8' olefin. Finally, after dehydratation of the epoxide at C3 by asqC, the quinolone epoxide rearrangement protein asqO catalyzes an enzymatic 3-exo-tet cyclization to yield the cyclopropyl-THF ring system in aspoquinolone. This Emericella nidulans (strain FGSC A4 / ATCC 38163 / CBS 112.46 / NRRL 194 / M139) (Aspergillus nidulans) protein is FAD-dependent monooxygenase asqG.